Consider the following 343-residue polypeptide: Anthranilate phosphoribosyltransferase (343 aa).

5-phospho-alpha-D-ribose 1-diphosphate is bound by residues G84, 87 to 88 (GD), T92, 94 to 97 (NIST), 112 to 120 (KHGNRGVSS), and S124. G84 lines the anthranilate pocket. S96 is a binding site for Mg(2+). N115 is an anthranilate binding site. R170 is an anthranilate binding site. Residues D229 and E230 each coordinate Mg(2+).

It belongs to the anthranilate phosphoribosyltransferase family. Homodimer. It depends on Mg(2+) as a cofactor.

The catalysed reaction is N-(5-phospho-beta-D-ribosyl)anthranilate + diphosphate = 5-phospho-alpha-D-ribose 1-diphosphate + anthranilate. The protein operates within amino-acid biosynthesis; L-tryptophan biosynthesis; L-tryptophan from chorismate: step 2/5. Functionally, catalyzes the transfer of the phosphoribosyl group of 5-phosphorylribose-1-pyrophosphate (PRPP) to anthranilate to yield N-(5'-phosphoribosyl)-anthranilate (PRA). This Burkholderia ambifaria (strain ATCC BAA-244 / DSM 16087 / CCUG 44356 / LMG 19182 / AMMD) (Burkholderia cepacia (strain AMMD)) protein is Anthranilate phosphoribosyltransferase.